We begin with the raw amino-acid sequence, 211 residues long: LexA repressor (211 aa).

Positions 35-55 (RAEIANFFGFKSANAAEEHLK) form a DNA-binding region, H-T-H motif. Catalysis depends on for autocatalytic cleavage activity residues S128 and K165.

Belongs to the peptidase S24 family. Homodimer.

It carries out the reaction Hydrolysis of Ala-|-Gly bond in repressor LexA.. Represses a number of genes involved in the response to DNA damage (SOS response), including recA and lexA. In the presence of single-stranded DNA, RecA interacts with LexA causing an autocatalytic cleavage which disrupts the DNA-binding part of LexA, leading to derepression of the SOS regulon and eventually DNA repair. This is LexA repressor from Colwellia psychrerythraea (strain 34H / ATCC BAA-681) (Vibrio psychroerythus).